Consider the following 208-residue polypeptide: Type 4 adapter protein LvgA (208 aa).

Residues 184–208 (GYGYPPESPRENYKHPVSSATTARK) are disordered.

As to quaternary structure, the T4BSS is a complex nanomachine composed of several subcomplexes. This subunit is part of the Type IV Coupling Complex (T4CC), a subcomplex composed of the DotLMNYZ core and the IcmSW-LvgA adapter subunits, linked by the C-terminal tail of DotL.

The protein resides in the cytoplasm. Component of the Dot/Icm type IVB secretion system (T4BSS), which is used to inject bacterial effector proteins into eukaryotic host cells. Part of a subcomplex which recruits effector proteins and delivers them to the core transmembrane subcomplex. Is a critical subunit for binding a subset of effector proteins. Recognizes more than one type of binding motif. May be a critical factor that confers host specificity. Necessary for full virulence of the bacterium in guinea pigs and presumably humans. The protein is Type 4 adapter protein LvgA of Legionella pneumophila.